A 132-amino-acid chain; its full sequence is Interleukin-4 (132 aa).

The first 24 residues, 1-24 (MGLTSQLIPTLVCLLALTSTFVHG), serve as a signal peptide directing secretion. 4 N-linked (GlcNAc...) asparagine glycosylation sites follow: N28, N45, N62, and N101. Disulfide bonds link C48/C84 and C70/C104.

The protein belongs to the IL-4/IL-13 family.

It is found in the secreted. In terms of biological role, participates in at least several B-cell activation processes as well as of other cell types. It is a costimulator of DNA-synthesis. It induces the expression of class II MHC molecules on resting B-cells. It enhances both secretion and cell surface expression of IgE and IgG1. It also regulates the expression of the low affinity Fc receptor for IgE (CD23) on both lymphocytes and monocytes. Positively regulates IL31RA expression in macrophages. Stimulates autophagy in dendritic cells by interfering with mTORC1 signaling and through the induction of RUFY4. The polypeptide is Interleukin-4 (IL4) (Ailuropoda melanoleuca (Giant panda)).